The following is a 388-amino-acid chain: Cdc42 effector protein 1 (388 aa).

The disordered stretch occupies residues methionine 1–histidine 28. Phosphoserine occurs at positions 19 and 27. The residue at position 34 (threonine 34) is a Phosphothreonine. A CRIB domain is found at isoleucine 38–glycine 52. Serine 39 is modified (phosphoserine). Arginine 53 bears the Omega-N-methylarginine mark. 6 positions are modified to phosphoserine: serine 65, serine 77, serine 101, serine 113, serine 121, and serine 139. A disordered region spans residues arginine 165–arginine 206. Basic and acidic residues predominate over residues proline 167 to glutamine 191. Serine 193, serine 207, serine 209, and serine 212 each carry phosphoserine. 2 tandem repeats follow at residues proline 237–alanine 243 and proline 250–alanine 256. The disordered stretch occupies residues proline 237–aspartate 257. The segment at proline 237–alanine 270 is 2 X 7 AA tandem repeats of [PT]-[AT]-A-[ENT]-[PT]-[PTS]-[AG]. A compositionally biased stretch (pro residues) spans alanine 239–lysine 253. Phosphoserine occurs at positions 298, 318, 347, and 350.

The protein belongs to the BORG/CEP family. In terms of assembly, interacts with RHOQ and CDC42, in a GTP-dependent manner.

The protein resides in the endomembrane system. The protein localises to the cytoplasm. It localises to the cytoskeleton. In terms of biological role, probably involved in the organization of the actin cytoskeleton. Induced membrane extensions in fibroblasts. This is Cdc42 effector protein 1 from Rattus norvegicus (Rat).